Reading from the N-terminus, the 586-residue chain is UvrABC system protein C (586 aa).

The region spanning 17 to 94 is the GIY-YIG domain; that stretch reads HKPGCYLWKD…IKQYKPRFNL (78 aa). The UVR domain maps to 201-236; sequence EQVLNHLQQQEIKASEQQNFEAARHFLDLQKAVLEL.

The protein belongs to the UvrC family. Interacts with UvrB in an incision complex.

The protein resides in the cytoplasm. Its function is as follows. The UvrABC repair system catalyzes the recognition and processing of DNA lesions. UvrC both incises the 5' and 3' sides of the lesion. The N-terminal half is responsible for the 3' incision and the C-terminal half is responsible for the 5' incision. The sequence is that of UvrABC system protein C from Mycoplasma pneumoniae (strain ATCC 29342 / M129 / Subtype 1) (Mycoplasmoides pneumoniae).